Here is a 107-residue protein sequence, read N- to C-terminus: C-X-C motif chemokine 3 (107 aa).

The N-terminal stretch at 1–34 (MAHATLSAAPSNPRLLRVALLLLLLVAASRRAAG) is a signal peptide. 2 disulfides stabilise this stretch: Cys43/Cys69 and Cys45/Cys85.

Belongs to the intercrine alpha (chemokine CxC) family. In terms of processing, N-terminal processed form GRO-gamma(5-73) is produced by proteolytic cleavage after secretion from peripheral blood monocytes.

It localises to the secreted. Functionally, ligand for CXCR2. Has chemotactic activity for neutrophils. May play a role in inflammation and exert its effects on endothelial cells in an autocrine fashion. In vitro, the processed form GRO-gamma(5-73) shows a fivefold higher chemotactic activity for neutrophilic granulocytes. This chain is C-X-C motif chemokine 3 (CXCL3), found in Homo sapiens (Human).